The following is a 60-amino-acid chain: Colanic acid capsular biosynthesis activation protein B (60 aa).

This Klebsiella aerogenes (Enterobacter aerogenes) protein is Colanic acid capsular biosynthesis activation protein B (rcsB).